Consider the following 68-residue polypeptide: Molybdenum-pterin-binding protein 1 (68 aa).

The 67-residue stretch at 2–68 folds into the Mop domain; that stretch reads SISARNQLKG…IKSTDVMILA (67 aa).

Functionally, binds one mole of molybdenum per mole of protein and contains a pterin. The sequence is that of Molybdenum-pterin-binding protein 1 (mopI) from Clostridium pasteurianum.